A 620-amino-acid chain; its full sequence is Chaperone protein HscA homolog (620 aa).

This sequence belongs to the heat shock protein 70 family.

Functionally, chaperone involved in the maturation of iron-sulfur cluster-containing proteins. Has a low intrinsic ATPase activity which is markedly stimulated by HscB. This Shewanella sp. (strain MR-7) protein is Chaperone protein HscA homolog.